The chain runs to 317 residues: Transcription factor EC (317 aa).

The interval 1-44 (MTLDHQILNQSFKRSHPPTPSSELLVQHGHPSPESDTGLTGNPL) is disordered. A necessary for transcriptional transactivation region spans residues 1-90 (MTLDHQILNQ…GLTSASCPSS (90 aa)). Positions 34 to 43 (ESDTGLTGNP) are enriched in polar residues. The bHLH domain occupies 110 to 163 (QKKDNHNLIERRRRYNINYRIKELGTLIPKSNDPDMRWNKGTILKASVEYIKWL). The segment at 241–317 (TSPELCDQAM…SFSSEDGDEL (77 aa)) is necessary for transcriptional transactivation. The tract at residues 297-317 (PAVSKESSRRSSFSSEDGDEL) is disordered.

It belongs to the MiT/TFE family. As to quaternary structure, homodimer. Forms heterodimers with MITF and TFE3. Interacts with MITF.

The protein resides in the nucleus. In terms of biological role, transcriptional regulator that acts as a repressor or an activator. Acts as a transcriptional repressor on minimal promoter containing element F (that includes an E-box sequence). Binds to element F in an E-box sequence-specific manner. Acts as a transcriptional transactivator on the proximal promoter region of the tartrate-resistant acid phosphatase (TRAP) E-box containing promoter. Collaborates with MITF in target gene activation. Acts as a transcriptional repressor on minimal promoter containing mu E3 enhancer sequence. Binds to mu E3 DNA sequence of the immunoglobulin heavy-chain gene enhancer. Binds DNA in a homo- or heterodimeric form. The chain is Transcription factor EC (TFEC) from Bos taurus (Bovine).